A 166-amino-acid polypeptide reads, in one-letter code: Disulfide bond formation protein B (166 aa).

At 1 to 12 the chain is on the cytoplasmic side; it reads MKITKLPSYRQT. Residues 13–29 traverse the membrane as a helical segment; the sequence is ALIIFAGCVGLILAALY. Topologically, residues 30–47 are periplasmic; it reads MQEVLGLHPCPLCITQRI. The cysteines at positions 39 and 42 are disulfide-linked. The helical transmembrane segment at 48-64 threads the bilayer; that stretch reads FIIGVGLISLIAAIHNP. Residues 65–70 are Cytoplasmic-facing; the sequence is AALGRK. A helical membrane pass occupies residues 71–88; sequence VYGCLATLSGVIGAGVSA. Over 89–145 the chain is Periplasmic; that stretch reads RHVWLQNLPEDQVPACGPDLAYMFDAFPLLDALKLLFAGDGNCADVVASFLGLSIPG. Cysteines 104 and 131 form a disulfide. The helical transmembrane segment at 146–164 threads the bilayer; the sequence is WTFVAFVGLIAISVWQGLR. Residues 165–166 lie on the Cytoplasmic side of the membrane; that stretch reads KA.

It belongs to the DsbB family.

Its subcellular location is the cell inner membrane. Its function is as follows. Required for disulfide bond formation in some periplasmic proteins. Acts by oxidizing the DsbA protein. The polypeptide is Disulfide bond formation protein B (Saccharophagus degradans (strain 2-40 / ATCC 43961 / DSM 17024)).